Reading from the N-terminus, the 429-residue chain is MGSPFKDHHHHHHPFSLAKKLIPWTFYAMIPLVLFRLYFYPYPLHNITTPILTSSSSSVSSSTPFVAEETSCDYTTGKWVRDKRGPLYNGSACGTIKEGQNCIAHGRPDMGYLYWRWKPKHCKLPRFEPNTFLQLLRNKHLAFVGDSMARNQLESLLCMLSSASAPNLVYRDGDDNKFRRWYFESHNINISVYWSPFLVKGVEKSNTGPNHNQLYLDHVDERWAADMNGIDMIVLSIGHWFLHPAVYYEGDQVLGCHYCPGLNHTEIGFYDVLRKAIKTTLKALIDRKGANSNGINAFVTTFSPAHFEGDWDKLGACPKTKPYKEGDKALEGMDADMRQIEVEEVEAAKMNSTQLEKFRLEALDVTSLSLMRPDGHPGPYMHPFPFANGVTERVQNDCVHWCLPGPIDTWNEILLEVIKKWDYESRREE.

At 1–20 (MGSPFKDHHHHHHPFSLAKK) the chain is on the cytoplasmic side. The chain crosses the membrane as a helical; Signal-anchor for type II membrane protein span at residues 21–41 (LIPWTFYAMIPLVLFRLYFYP). The Lumenal portion of the chain corresponds to 42–429 (YPLHNITTPI…KWDYESRREE (388 aa)). Residues Asn46 and Asn89 are each glycosylated (N-linked (GlcNAc...) asparagine). Disulfide bonds link Cys72–Cys122, Cys93–Cys158, Cys102–Cys402, and Cys317–Cys398. The GDS motif motif lies at 145 to 147 (GDS). Ser147 acts as the Nucleophile in catalysis. 3 N-linked (GlcNAc...) asparagine glycosylation sites follow: Asn189, Asn263, and Asn351. Asp397 acts as the Proton donor in catalysis. Positions 397-400 (DCVH) match the DXXH motif motif. His400 (proton acceptor) is an active-site residue.

The protein belongs to the PC-esterase family. TBL subfamily.

The protein resides in the golgi apparatus membrane. In terms of biological role, xyloglucan acetyltransferase that catalyzes the acetylation of fucosylated Gal residues on xyloglucan side chains. Predominantly catalyze 6-O-monoacetylation of Gal residues in the Fuc-Gal-Xyl trisaccharide side chains of xyloglucan oligomers. The sequence is that of Xyloglucan O-acetyltransferase 1 from Populus trichocarpa (Western balsam poplar).